A 183-amino-acid polypeptide reads, in one-letter code: Troponin I, fast skeletal muscle (183 aa).

Serine 2 carries the post-translational modification N-acetylserine. Residues 2-48 (SDEEKKRRAATARRQHLKSAMLQLAVTEIEKEAAAKEVEKQNYLAEH) form an involved in binding TNC region. The tract at residues 97–117 (SQKLFDLRGKFKRPPLRRVRM) is involved in binding TNC and actin.

This sequence belongs to the troponin I family. Binds to actin and tropomyosin. In terms of processing, the N-terminus is blocked.

Its function is as follows. Troponin I is the inhibitory subunit of troponin, the thin filament regulatory complex which confers calcium-sensitivity to striated muscle actomyosin ATPase activity. The polypeptide is Troponin I, fast skeletal muscle (TNNI2) (Gallus gallus (Chicken)).